Consider the following 477-residue polypeptide: TNF receptor-associated factor family protein DDB_G0278133 (477 aa).

The RING-type; degenerate zinc finger occupies 45–88 (CDICTLELFIESEPKALQCKEGHLACRRCWERYLSTNKQCMTCK). TRAF-type zinc fingers lie at residues 160-211 (NHYK…SSLS) and 212-267 (DHHK…SKMQ). Positions 271 to 326 (LEHSVTKLMNQNEIIKKDNQNLDQEKKIEEIKLKLNNLLNNYIQLKNEIAVLKQNS) form a coiled coil. The MATH domain occupies 331–463 (VYSNKWIIPE…FLNEKGELEI (133 aa)).

The protein belongs to the TNF receptor-associated factor family. A subfamily.

It localises to the cytoplasm. Its function is as follows. Probable adapter protein and signal transducer that links members of the tumor necrosis factor receptor family to different signaling pathways by association with the receptor cytoplasmic domain and kinases. This Dictyostelium discoideum (Social amoeba) protein is TNF receptor-associated factor family protein DDB_G0278133.